The sequence spans 679 residues: MNFYSAYQHGFVRVAACTHHTTIGDPAANAASVLDMARACHDDGAALAVFPELTLSGYSIEDVLLQDSLLDAVEDALLDLVTESADLLPVLVVGAPLRHRHRIYNTAVVIHRGAVLGVVPKSYLPTYREFYERRQMAPGDGERGTIRIGGADVAFGTDLLFAASDLPGFVLHVEICEDMFVPMPPSAEAALAGATVLANLSGSPITIGRAEDRRLLARSASARCLAAYVYAAAGEGESTTDLAWDGQTMIWENGALLAESERFPKGVRRSVADVDTELLRSERLRMGTFDDNRRHHRELTESFRRIDFALDPPAGDIGLLREVERFPFVPADPQRLQQDCYEAYNIQVSGLEQRLRALDYPKVVIGVSGGLDSTHALIVATHAMDREGRPRSDILAFALPGFATGEHTKNNAIKLARALGVTFSEIDIGDTARLMLHTIGHPYSVGEKVYDVTFENVQAGLRTDYLFRIANQRGGIVLGTGDLSELALGWSTYGVGDQMSHYNVNAGVPKTLIQHLIRWVISAGEFGEKVGEVLQSVLDTEITPELIPTGEEELQSSEAKVGPFALQDFSLFQVLRYGFRPSKIAFLAWHAWNDAERGNWPPGFPKSERPSYSLAEIRHWLQIFVQRFYSFSQFKRSALPNGPKVSHGGALSPRGDWRAPSDMSARIWLDQIDREVPKG.

Positions 12–276 (VRVAACTHHT…VRRSVADVDT (265 aa)) constitute a CN hydrolase domain. The Proton acceptor; for glutaminase activity role is filled by Glu-52. Residue Lys-121 is the For glutaminase activity of the active site. Tyr-127 provides a ligand contact to L-glutamine. The active-site Nucleophile; for glutaminase activity is Cys-176. L-glutamine-binding residues include Ser-203 and Arg-209. The interval 337-679 (QQDCYEAYNI…DQIDREVPKG (343 aa)) is ligase. An ATP-binding site is contributed by 366 to 373 (GVSGGLDS). Asn-456 contacts deamido-NAD(+). Thr-480 contributes to the ATP binding site. Deamido-NAD(+) is bound by residues Glu-485, 490–493 (WSTY), and Lys-635. The tract at residues 639 to 658 (LPNGPKVSHGGALSPRGDWR) is disordered.

It in the C-terminal section; belongs to the NAD synthetase family.

The enzyme catalyses deamido-NAD(+) + L-glutamine + ATP + H2O = L-glutamate + AMP + diphosphate + NAD(+) + H(+). The protein operates within cofactor biosynthesis; NAD(+) biosynthesis; NAD(+) from deamido-NAD(+) (L-Gln route): step 1/1. Catalyzes the ATP-dependent amidation of deamido-NAD to form NAD. Uses L-glutamine as a nitrogen source. In Mycobacterium bovis (strain ATCC BAA-935 / AF2122/97), this protein is Glutamine-dependent NAD(+) synthetase.